Here is a 311-residue protein sequence, read N- to C-terminus: tRNA dimethylallyltransferase (311 aa).

12–19 (GPTASGKT) contacts ATP. 14–19 (TASGKT) lines the substrate pocket. Interaction with substrate tRNA regions lie at residues 37-40 (DSAM) and 161-165 (QRIQR).

Belongs to the IPP transferase family. Monomer. Mg(2+) serves as cofactor.

The catalysed reaction is adenosine(37) in tRNA + dimethylallyl diphosphate = N(6)-dimethylallyladenosine(37) in tRNA + diphosphate. Catalyzes the transfer of a dimethylallyl group onto the adenine at position 37 in tRNAs that read codons beginning with uridine, leading to the formation of N6-(dimethylallyl)adenosine (i(6)A). The polypeptide is tRNA dimethylallyltransferase (Coxiella burnetii (strain Dugway 5J108-111)).